The primary structure comprises 125 residues: MLARPSRLTRRPDYVACYNTGRRYFSKHFIVFALEREGAAPVWRYGLAVSRKVGDAVRRNRTKRVLREFFRLYQDDMPGGMDLVVVPKRRLDPRRVTLDLAVQELLPLMREIRDSLCREANDGTP.

This sequence belongs to the RnpA family. In terms of assembly, consists of a catalytic RNA component (M1 or rnpB) and a protein subunit.

The catalysed reaction is Endonucleolytic cleavage of RNA, removing 5'-extranucleotides from tRNA precursor.. Functionally, RNaseP catalyzes the removal of the 5'-leader sequence from pre-tRNA to produce the mature 5'-terminus. It can also cleave other RNA substrates such as 4.5S RNA. The protein component plays an auxiliary but essential role in vivo by binding to the 5'-leader sequence and broadening the substrate specificity of the ribozyme. This Oleidesulfovibrio alaskensis (strain ATCC BAA-1058 / DSM 17464 / G20) (Desulfovibrio alaskensis) protein is Ribonuclease P protein component.